The sequence spans 944 residues: uncharacterized protein (944 aa).

This is an uncharacterized protein from Ureaplasma parvum serovar 3 (strain ATCC 700970).